Consider the following 443-residue polypeptide: Ribosomal protein uS12 methylthiotransferase RimO (443 aa).

Residues 1 to 114 form the MTTase N-terminal domain; sequence MGFVSLGCPK…VMQAVHTHLP (114 aa). [4Fe-4S] cluster-binding residues include Cys8, Cys44, Cys73, Cys145, Cys149, and Cys152. The Radical SAM core domain maps to 131-372; it reads LTPKHYAYLK…MEVAEEVSAR (242 aa). The region spanning 375-443 is the TRAM domain; sequence QRKVGQTLRV…ADGHDLWGAV (69 aa).

The protein belongs to the methylthiotransferase family. RimO subfamily. [4Fe-4S] cluster serves as cofactor.

Its subcellular location is the cytoplasm. It carries out the reaction L-aspartate(89)-[ribosomal protein uS12]-hydrogen + (sulfur carrier)-SH + AH2 + 2 S-adenosyl-L-methionine = 3-methylsulfanyl-L-aspartate(89)-[ribosomal protein uS12]-hydrogen + (sulfur carrier)-H + 5'-deoxyadenosine + L-methionine + A + S-adenosyl-L-homocysteine + 2 H(+). Functionally, catalyzes the methylthiolation of an aspartic acid residue of ribosomal protein uS12. The polypeptide is Ribosomal protein uS12 methylthiotransferase RimO (Cupriavidus necator (strain ATCC 17699 / DSM 428 / KCTC 22496 / NCIMB 10442 / H16 / Stanier 337) (Ralstonia eutropha)).